The primary structure comprises 232 residues: MSLIESIRKQVTPIHPEGYVFIASFGVATLVLGSFFSPLGWIGAFATAWCAYFFRDPVRQTPLDEGLVISPADGVISAVGFFPPPPELGLGVEPLQRISVFMSVFDCHVNRAPVAGRIVKIAYKPGLFLNADLDKASEDNERNGLVIETAAGRFGVVQIAGLVARRIVCFVRQGESIGVGDRIGLIRFGSRVDVYLPGTARALVTVGSKAVAGETVLAELRAGANRRAFKSS.

Catalysis depends on Ser190, which acts as the Schiff-base intermediate with substrate; via pyruvic acid. Ser190 is subject to Pyruvic acid (Ser); by autocatalysis.

This sequence belongs to the phosphatidylserine decarboxylase family. PSD-A subfamily. As to quaternary structure, heterodimer of a large membrane-associated beta subunit and a small pyruvoyl-containing alpha subunit. Requires pyruvate as cofactor. In terms of processing, is synthesized initially as an inactive proenzyme. Formation of the active enzyme involves a self-maturation process in which the active site pyruvoyl group is generated from an internal serine residue via an autocatalytic post-translational modification. Two non-identical subunits are generated from the proenzyme in this reaction, and the pyruvate is formed at the N-terminus of the alpha chain, which is derived from the carboxyl end of the proenzyme. The post-translation cleavage follows an unusual pathway, termed non-hydrolytic serinolysis, in which the side chain hydroxyl group of the serine supplies its oxygen atom to form the C-terminus of the beta chain, while the remainder of the serine residue undergoes an oxidative deamination to produce ammonia and the pyruvoyl prosthetic group on the alpha chain.

The protein localises to the cell membrane. It carries out the reaction a 1,2-diacyl-sn-glycero-3-phospho-L-serine + H(+) = a 1,2-diacyl-sn-glycero-3-phosphoethanolamine + CO2. It functions in the pathway phospholipid metabolism; phosphatidylethanolamine biosynthesis; phosphatidylethanolamine from CDP-diacylglycerol: step 2/2. Its function is as follows. Catalyzes the formation of phosphatidylethanolamine (PtdEtn) from phosphatidylserine (PtdSer). In Methylocella silvestris (strain DSM 15510 / CIP 108128 / LMG 27833 / NCIMB 13906 / BL2), this protein is Phosphatidylserine decarboxylase proenzyme.